A 417-amino-acid chain; its full sequence is Imidazolonepropionase (417 aa).

Residues His80 and His82 each coordinate Fe(3+). Residues His80 and His82 each coordinate Zn(2+). Residues Arg89, Tyr152, and His187 each contribute to the 4-imidazolone-5-propanoate site. Tyr152 contacts N-formimidoyl-L-glutamate. Fe(3+) is bound at residue His252. His252 contacts Zn(2+). Glu255 lines the 4-imidazolone-5-propanoate pocket. A Fe(3+)-binding site is contributed by Asp326. Asp326 serves as a coordination point for Zn(2+). N-formimidoyl-L-glutamate-binding residues include Asn328 and Gly330. 4-imidazolone-5-propanoate is bound at residue Ser331.

Belongs to the metallo-dependent hydrolases superfamily. HutI family. Zn(2+) is required as a cofactor. It depends on Fe(3+) as a cofactor.

It is found in the cytoplasm. The enzyme catalyses 4-imidazolone-5-propanoate + H2O = N-formimidoyl-L-glutamate. It participates in amino-acid degradation; L-histidine degradation into L-glutamate; N-formimidoyl-L-glutamate from L-histidine: step 3/3. Functionally, catalyzes the hydrolytic cleavage of the carbon-nitrogen bond in imidazolone-5-propanoate to yield N-formimidoyl-L-glutamate. It is the third step in the universal histidine degradation pathway. This is Imidazolonepropionase from Bacteroides fragilis (strain ATCC 25285 / DSM 2151 / CCUG 4856 / JCM 11019 / LMG 10263 / NCTC 9343 / Onslow / VPI 2553 / EN-2).